The sequence spans 306 residues: Nucleotide-binding protein RSal33209_2275 (306 aa).

29–36 (GMSGAGRS) serves as a coordination point for ATP. Residue 80 to 83 (DVRG) participates in GTP binding.

The protein belongs to the RapZ-like family.

Displays ATPase and GTPase activities. This chain is Nucleotide-binding protein RSal33209_2275, found in Renibacterium salmoninarum (strain ATCC 33209 / DSM 20767 / JCM 11484 / NBRC 15589 / NCIMB 2235).